The primary structure comprises 502 residues: Cysteine protease RavZ (502 aa).

Short sequence motifs (LIR) lie at residues 9–23 and 23–37; these read DKLI…GEQE and ESDI…GDEK. The interval 49-325 is catalytic region; it reads SIYPPETSWE…ESALTEGKTL (277 aa). Active-site residues include H176 and D197. The segment at 211–217 is alpha-3 helix; sequence YFKGKYR. The active site involves C258. Positions 326 to 431 are membrane targeting region; the sequence is PVQLSEFIVA…VLPCVKFDDT (106 aa). Residues 429 to 443 carry the LIR 3 motif; that stretch reads DDTIDDFVTIEKDEL.

The protein resides in the secreted. It localises to the host cytoplasmic vesicle membrane. It catalyses the reaction [protein]-C-terminal L-amino acid-glycyl-phosphatidylethanolamide + H2O = a 1,2-diacyl-sn-glycero-3-phosphoethanolamine-N-glycine + [protein]-C-terminal &lt;stereo&gt;L-&lt;/stereo&gt;amino acid. It carries out the reaction [protein]-C-terminal L-amino acid-glycyl-phosphatidylserine + H2O = 1,2-diacyl-sn-glycero-3-phospho-L-serine-N-glycine + [protein]-C-terminal &lt;stereo&gt;L-&lt;/stereo&gt;amino acid. In terms of biological role, cysteine protease effector that inhibits host cell autophagy by targeting lipid-conjugated ATG8 family proteins on pre-autophagosomal structures. Specifically hydrolyzes the amide bond between the C-terminal glycine residue and an adjacent aromatic residue in ATG8 proteins conjugated to phosphatidylethanolamine (PE), producing an ATG8 protein that cannot be reconjugated by host ATG7 and ATG3. Mechanistically, Ravz interacts with ATG8 proteins conjugated to PE via its LIR motifs, extracts them from the membrane of autophagosomes and integrates the PE part into its own lipid-binding site. It then removes the lipid component of the ATG8 protein. Also able to mediate delipidation of ATG8 proteins conjugated to phosphatidylserine (PS) during non-canonical autophagy. Inhibits host ubiquitin recruitment to bacteria-containing vacuoles, suggesting that it is able to mediate delipidation of other proteins in addition to ATG8 proteins. It is however not involved in the exclusion of autophagy adapters from bacteria-containing vacuoles decorated with ubiquitin. In Legionella pneumophila subsp. pneumophila (strain Philadelphia 1 / ATCC 33152 / DSM 7513), this protein is Cysteine protease RavZ.